We begin with the raw amino-acid sequence, 306 residues long: MMALGVPPPPSRAYVSGPLRDDDTFGGDRVRRRRRWLKEQCPAIIVHGGGRRGGVGHRALAAGVSKMRLPALNAATHRIPSTSPLSIPQTLTITRDPPYPMLPRSHGHRTGGGGFSLKSSPFSSVGEERVPDPKPRRNPRPEQIRILEAIFNSGMVNPPRDEIPRIRMQLQEYGQVGDANVFYWFQNRKSRSKNKLRSGGTGRAGLGLGGNRASEPPAAATAHREAVAPSFTPPPILPPQPVQPQQQLVSPVAAPTSLSSSSSDRSSGSSKPARATLTQAMSVTAAMDLLSPLRRSARPRQEQRHV.

The span at 1–11 (MMALGVPPPPS) shows a compositional bias: pro residues. Disordered stretches follow at residues 1–20 (MMAL…GPLR), 103–142 (PRSH…PRPE), and 190–276 (SRSK…ARAT). Over residues 126–142 (GEERVPDPKPRRNPRPE) the composition is skewed to basic and acidic residues. The homeobox; WUS-type DNA-binding region spans 132–196 (DPKPRRNPRP…NRKSRSKNKL (65 aa)). Residues 199-210 (GGTGRAGLGLGG) are compositionally biased toward gly residues. Residues 231–242 (FTPPPILPPQPV) are compositionally biased toward pro residues. Positions 243–270 (QPQQQLVSPVAAPTSLSSSSSDRSSGSS) are enriched in low complexity.

This sequence belongs to the WUS homeobox family.

The protein localises to the nucleus. Its function is as follows. Transcription factor which may be involved in developmental processes. The protein is WUSCHEL-related homeobox 13 (WOX13) of Oryza sativa subsp. japonica (Rice).